The chain runs to 574 residues: MRVIRSLLLLTIAIIGSVLSQSSIDDGYTVFYSQPDNYYVKPGTFSNGVAQAIFSNEMMTTGWSFMSISSSEGLYPNDIIAAGAGYLEGYISQEMIYQNWMNMYNNEYHNVIGSDVENWIQENLQYLQTMIDSAPSNDLYWQNVETVLTQITYMQRGYNQSVIDNGVDASQSLGITEFFLMNMDGDMIDLGPALNLTNGKQVTSPATATSPKQAFKEFMRRTGHCSALIKMTDDLSDLFSGHTTWSSYYEMVRMFKVYNLKYLFNGQPPASKVTMFSGYPGTLSSIDDFYLLDTKIVVIETTNGLMNNNLYHLITSESVLSWIRVIVANRLATGGESWCQTFSLYNSGTYNNQWIIVDYNKFIKGYGALDGTLYILEQVPDYVEYGDQTAILRTGYWPSFNIPFYENIYGLTGFNETYAQFGNWFSYQASPRSMIFKRDANNIHSLTQFQAMLRYNNWQNDPFSQGNAGNQISSRFDLVTADDPNNQYLDPDAFGGIDSKVVSADMVAALLVNAQSGPSHDNETPFTWNSQWNQKYTYAGQPTTWNFDWMTMSLQSMKPASPSSDSSSDSTTFN.

A signal peptide spans 1-20 (MRVIRSLLLLTIAIIGSVLS). Asn159, Asn195, and Asn415 each carry an N-linked (GlcNAc...) asparagine glycan.

Belongs to the phospholipase B-like family.

The protein resides in the secreted. Phospholipase that removes both fatty-acid chains from phosphatidylcholine and produces the water-soluble glycerophosphorylcholine. In addition to phosphatidylcholine deacylation, it also hydrolyzes phosphatidylinositol and phosphatidylethanolamine. The sequence is that of Phospholipase B-like protein A (plbA) from Dictyostelium discoideum (Social amoeba).